The following is a 243-amino-acid chain: Protein IN2-1 homolog A (243 aa).

Positions 31 to 112 constitute a GST N-terminal domain; it reads GTTRLYICYF…YIDSHFEGPA (82 aa). Residues K70, V84, and 96 to 97 each bind glutathione; that span reads ES. Residues 117-240 enclose the GST C-terminal domain; it reads DPEKRQFADE…YLLDLAKTHL (124 aa).

Belongs to the GST superfamily. HSP26 family.

The protein is Protein IN2-1 homolog A of Oryza sativa subsp. japonica (Rice).